Consider the following 243-residue polypeptide: Adenosylcobinamide-GDP ribazoletransferase (243 aa).

Transmembrane regions (helical) follow at residues 31–51 (LLFY…FSAL), 57–77 (LMLH…GLHL), 109–129 (IAVV…LALI), 135–155 (IGLL…FLGT), and 188–208 (VLLA…CFFW).

This sequence belongs to the CobS family. Requires Mg(2+) as cofactor.

It localises to the cell inner membrane. The catalysed reaction is alpha-ribazole + adenosylcob(III)inamide-GDP = adenosylcob(III)alamin + GMP + H(+). It catalyses the reaction alpha-ribazole 5'-phosphate + adenosylcob(III)inamide-GDP = adenosylcob(III)alamin 5'-phosphate + GMP + H(+). Its pathway is cofactor biosynthesis; adenosylcobalamin biosynthesis; adenosylcobalamin from cob(II)yrinate a,c-diamide: step 7/7. Joins adenosylcobinamide-GDP and alpha-ribazole to generate adenosylcobalamin (Ado-cobalamin). Also synthesizes adenosylcobalamin 5'-phosphate from adenosylcobinamide-GDP and alpha-ribazole 5'-phosphate. This Pseudomonas savastanoi pv. phaseolicola (strain 1448A / Race 6) (Pseudomonas syringae pv. phaseolicola (strain 1448A / Race 6)) protein is Adenosylcobinamide-GDP ribazoletransferase.